A 218-amino-acid polypeptide reads, in one-letter code: Probable transaldolase (218 aa).

Lys-83 (schiff-base intermediate with substrate) is an active-site residue.

Belongs to the transaldolase family. Type 3B subfamily.

It is found in the cytoplasm. The enzyme catalyses D-sedoheptulose 7-phosphate + D-glyceraldehyde 3-phosphate = D-erythrose 4-phosphate + beta-D-fructose 6-phosphate. It participates in carbohydrate degradation; pentose phosphate pathway; D-glyceraldehyde 3-phosphate and beta-D-fructose 6-phosphate from D-ribose 5-phosphate and D-xylulose 5-phosphate (non-oxidative stage): step 2/3. In terms of biological role, transaldolase is important for the balance of metabolites in the pentose-phosphate pathway. This is Probable transaldolase from Thermotoga petrophila (strain ATCC BAA-488 / DSM 13995 / JCM 10881 / RKU-1).